The following is a 624-amino-acid chain: Bifunctional protein ArgH (624 aa).

The segment at 1 to 466 (MALWGGRFTQ…AARDTTLVKV (466 aa)) is argininosuccinate lyase. Residues 464-614 (VKVRPARITD…DEVALEFNLS (151 aa)) form the N-acetyltransferase domain. The interval 467–624 (RPARITDIET…EQIISQVKVA (158 aa)) is probable acetyltransferase.

In the N-terminal section; belongs to the lyase 1 family. Argininosuccinate lyase subfamily.

The protein localises to the cytoplasm. The enzyme catalyses 2-(N(omega)-L-arginino)succinate = fumarate + L-arginine. It functions in the pathway amino-acid biosynthesis; L-arginine biosynthesis; L-arginine from L-ornithine and carbamoyl phosphate: step 3/3. In Vibrio vulnificus (strain CMCP6), this protein is Bifunctional protein ArgH (argH).